Consider the following 749-residue polypeptide: Cytosolic phospholipase A2 (749 aa).

Residues 1–124 (MASIDPYQHI…GEKKQVPFTF (124 aa)) form the C2 domain. The segment at 1 to 178 (MASIDPYQHI…LRKLLGPEKT (178 aa)) is phospholipid binding. Asp-40, Thr-41, Asp-43, Asn-65, Asp-93, Ala-94, and Asn-95 together coordinate Ca(2+). A PLA2c domain is found at 138-740 (VCSSTDLRFS…NDVEARKLLH (603 aa)). The active-site Nucleophile is the Ser-229. The interval 417 to 458 (MEEEIENLKPKHILGNDSSDSDDEMQEPKGTENSKAEEEYQR) is disordered. Residues 442–457 (QEPKGTENSKAEEEYQ) show a composition bias toward basic and acidic residues. Residue Asp-549 is the Proton acceptor of the active site.

The protein localises to the cytoplasm. The protein resides in the cytoplasmic vesicle. It carries out the reaction a 1,2-diacyl-sn-glycero-3-phosphocholine + H2O = a 1-acyl-sn-glycero-3-phosphocholine + a fatty acid + H(+). It catalyses the reaction a 1-acyl-sn-glycero-3-phosphocholine + H2O = sn-glycerol 3-phosphocholine + a fatty acid + H(+). Its activity is regulated as follows. Stimulated by agonists such as ATP, EGF, thrombin and bradykinin as well as by cytosolic Ca(2+). In terms of biological role, selectively hydrolyzes arachidonyl phospholipids in the sn-2 position releasing arachidonic acid. Together with its lysophospholipid activity, it is implicated in the initiation of the inflammatory response. This Xenopus tropicalis (Western clawed frog) protein is Cytosolic phospholipase A2 (pla2g4a).